The primary structure comprises 246 residues: uncharacterized protein (246 aa).

Disordered stretches follow at residues 9–125 (CSRV…GAMA) and 155–203 (QPVR…EEKA). A compositionally biased stretch (basic residues) spans 27 to 37 (GTRRQRQRPRQ). Pro residues-rich tracts occupy residues 54–64 (PRPPTGPPARY) and 101–117 (EPRP…PPGS). A compositionally biased stretch (basic residues) spans 161-176 (KLPKGKGRLRRPRQSR). At threonine 179 the chain carries Phosphothreonine. Phosphoserine occurs at positions 196, 210, and 220.

It is found in the cytoplasm. This is an uncharacterized protein from Mus musculus (Mouse).